The sequence spans 75 residues: U6-lycotoxin-Ls1h (75 aa).

A signal peptide spans 1 to 21 (MKLLLFTALVLVVISLIEVEA). The propeptide occupies 22–25 (ENER).

This sequence belongs to the neurotoxin 19 (CSTX) family. 06 (U6-Lctx) subfamily. Contains 4 disulfide bonds. Expressed by the venom gland.

The protein localises to the secreted. The polypeptide is U6-lycotoxin-Ls1h (Lycosa singoriensis (Wolf spider)).